The chain runs to 203 residues: Dual-action ribosomal maturation protein DarP (203 aa).

Disordered stretches follow at residues 1 to 31 and 182 to 203; these read MPPM…SKSQ and GGAS…DDEA. Residues 186–203 are compositionally biased toward acidic residues; the sequence is DSDDEAADDAGDDHDDEA.

Belongs to the DarP family.

The protein resides in the cytoplasm. In terms of biological role, member of a network of 50S ribosomal subunit biogenesis factors which assembles along the 30S-50S interface, preventing incorrect 23S rRNA structures from forming. Promotes peptidyl transferase center (PTC) maturation. This is Dual-action ribosomal maturation protein DarP from Burkholderia cenocepacia (strain HI2424).